The sequence spans 142 residues: MVLSANDKSNVKAVFAKIGGQAGDLGGEALERLFITYPQTKTYFPHFDLSHGSAQIKGHGKKVAEALVEAANHIDDIAGALSKLSDLHAQKLRVDPVNFKLLGHCFLVVVAVHFPSLLTPEVHASLDKFVLAVGTVLTAKYR.

The Globin domain maps to 2–142 (VLSANDKSNV…VGTVLTAKYR (141 aa)). Position 59 (histidine 59) interacts with O2. Histidine 88 is a heme b binding site.

It belongs to the globin family. In terms of assembly, heterotetramer of two alpha chains and two beta chains. Red blood cells.

Its function is as follows. Involved in oxygen transport from the lung to the various peripheral tissues. The sequence is that of Hemoglobin subunit alpha-A (HBAA) from Columba livia (Rock dove).